A 124-amino-acid polypeptide reads, in one-letter code: Fluoride-specific ion channel FluC (124 aa).

Transmembrane regions (helical) follow at residues 4–24 (FVLV…LSGV), 35–55 (YGTV…WGIL), 67–87 (LLLL…TYEG), and 100–120 (ALYI…GAGL). The Na(+) site is built by Gly75 and Thr78.

It belongs to the fluoride channel Fluc/FEX (TC 1.A.43) family.

The protein resides in the cell inner membrane. It catalyses the reaction fluoride(in) = fluoride(out). With respect to regulation, na(+) is not transported, but it plays an essential structural role and its presence is essential for fluoride channel function. Its function is as follows. Fluoride-specific ion channel. Important for reducing fluoride concentration in the cell, thus reducing its toxicity. The protein is Fluoride-specific ion channel FluC of Nitratidesulfovibrio vulgaris (strain ATCC 29579 / DSM 644 / CCUG 34227 / NCIMB 8303 / VKM B-1760 / Hildenborough) (Desulfovibrio vulgaris).